Here is a 180-residue protein sequence, read N- to C-terminus: Cell division protein SepF (180 aa).

A disordered region spans residues 14–81; the sequence is NSEDDEEFDN…SKITPISKSS (68 aa). The segment covering 15-35 has biased composition (acidic residues); it reads SEDDEEFDNEDYYLDDEEEEE. Residues 57-68 show a composition bias toward basic and acidic residues; that stretch reads TRRDTTPKEKPV. A compositionally biased stretch (low complexity) spans 69-79; the sequence is KTTSKITPISK.

It belongs to the SepF family. As to quaternary structure, homodimer. Interacts with FtsZ.

It localises to the cytoplasm. In terms of biological role, cell division protein that is part of the divisome complex and is recruited early to the Z-ring. Probably stimulates Z-ring formation, perhaps through the cross-linking of FtsZ protofilaments. Its function overlaps with FtsA. The protein is Cell division protein SepF of Agathobacter rectalis (strain ATCC 33656 / DSM 3377 / JCM 17463 / KCTC 5835 / VPI 0990) (Eubacterium rectale).